Reading from the N-terminus, the 498-residue chain is Putative ABC transporter ATP-binding protein MM_2387 (498 aa).

ABC transporter domains follow at residues 2–242 (IELR…TSKS) and 258–490 (ISIK…VEEK). ATP-binding positions include 36 to 43 (GHSAAGKT) and 290 to 297 (GENGSGKT).

The protein belongs to the ABC transporter superfamily.

The protein resides in the cell membrane. Probably part of an ABC transporter complex. Responsible for energy coupling to the transport system. In Methanosarcina mazei (strain ATCC BAA-159 / DSM 3647 / Goe1 / Go1 / JCM 11833 / OCM 88) (Methanosarcina frisia), this protein is Putative ABC transporter ATP-binding protein MM_2387.